A 544-amino-acid polypeptide reads, in one-letter code: Terpene synthase 9 (544 aa).

Mg(2+) is bound by residues D296, D300, and E449. The short motif at 296–300 is the DDXXD motif element; that stretch reads DDTFD.

This sequence belongs to the terpene synthase family. Tpsa subfamily. It depends on Mg(2+) as a cofactor. The cofactor is Mn(2+).

It carries out the reaction (2E,6E)-farnesyl diphosphate = (1E,4E)-germacrene B + diphosphate. The enzyme catalyses (2E)-geranyl diphosphate = terpinolene + diphosphate. It catalyses the reaction (2E)-geranyl diphosphate = limonene + diphosphate. The catalysed reaction is (2E)-geranyl diphosphate = beta-myrcene + diphosphate. It carries out the reaction (2Z,6Z)-farnesyl diphosphate = germacrene A + diphosphate. The enzyme catalyses (2Z,6Z)-farnesyl diphosphate = alpha-humulene + diphosphate. The protein operates within secondary metabolite biosynthesis; terpenoid biosynthesis. Its function is as follows. Sesquiterpene synthase involved in the biosynthesis of volatile compounds. Mediates the conversion of (2E,6E)-farnesyl diphosphate (FPP) into (1E,4E)-germacrene B, but also smaller amounts of germacrene A and C, and of (2Z,6Z)-farnesyl diphosphate ((ZZ)-FPP) into alpha-humulene, germacrene A and germacrene B. Can act with a low efficiency as a monoterpene synthase with geranyl diphosphate (GPP) as substrate, thus producing beta-myrcene, limonene and terpinolene. This chain is Terpene synthase 9, found in Solanum habrochaites (Wild tomato).